The following is a 166-amino-acid chain: Lipoprotein signal peptidase (166 aa).

Transmembrane regions (helical) follow at residues Leu12–Val32, Met66–Trp86, and Ala101–Ile121. Catalysis depends on residues Asp122 and Asp140. A helical membrane pass occupies residues Ser132–Leu152.

The protein belongs to the peptidase A8 family.

It localises to the cell inner membrane. The enzyme catalyses Release of signal peptides from bacterial membrane prolipoproteins. Hydrolyzes -Xaa-Yaa-Zaa-|-(S,diacylglyceryl)Cys-, in which Xaa is hydrophobic (preferably Leu), and Yaa (Ala or Ser) and Zaa (Gly or Ala) have small, neutral side chains.. The protein operates within protein modification; lipoprotein biosynthesis (signal peptide cleavage). Its function is as follows. This protein specifically catalyzes the removal of signal peptides from prolipoproteins. The sequence is that of Lipoprotein signal peptidase from Sinorhizobium fredii (strain NBRC 101917 / NGR234).